A 313-amino-acid polypeptide reads, in one-letter code: Solute carrier family 35 member E3 (313 aa).

The next 10 helical transmembrane spans lie at 17–37, 40–60, 77–97, 100–120, 130–147, 153–173, 187–206, 225–245, 252–272, and 275–295; these read GLLLNLLVSICIVFLNKWIYV, GFPNMSLTLVHFVVTWLGLYV, LLLLALSFCGFVVFTNLSLQN, IGTYQLAKAMTTPVIIVIQTL, IRLTLIPITLGVILNSYY, FLGTVFAALGVLVTSLYQVWV, LLYYQAPMSSAMLLVAVPFF, LMVLLSGVIAFMVNLSIYWII, TYNMFGHFKFCITLFGGYVLF, and PLSINQGLGMLCTLFGILAYT.

The protein belongs to the TPT transporter family. SLC35E subfamily.

It is found in the membrane. Putative transporter. In Bos taurus (Bovine), this protein is Solute carrier family 35 member E3 (SLC35E3).